Here is a 161-residue protein sequence, read N- to C-terminus: Cyclic pyranopterin monophosphate synthase (161 aa).

Substrate is bound by residues leucine 75–histidine 77 and methionine 113–glutamate 114. The active site involves aspartate 128.

This sequence belongs to the MoaC family. Homohexamer; trimer of dimers.

It catalyses the reaction (8S)-3',8-cyclo-7,8-dihydroguanosine 5'-triphosphate = cyclic pyranopterin phosphate + diphosphate. The protein operates within cofactor biosynthesis; molybdopterin biosynthesis. Its function is as follows. Catalyzes the conversion of (8S)-3',8-cyclo-7,8-dihydroguanosine 5'-triphosphate to cyclic pyranopterin monophosphate (cPMP). This is Cyclic pyranopterin monophosphate synthase from Thioalkalivibrio sulfidiphilus (strain HL-EbGR7).